Here is a 156-residue protein sequence, read N- to C-terminus: Protein SprT (156 aa).

The region spanning 15–153 is the SprT-like domain; the sequence is NRYFNKHFTP…CKKCKEILVL (139 aa). Histidine 67 serves as a coordination point for Zn(2+). Glutamate 68 is a catalytic residue. Histidine 71 contributes to the Zn(2+) binding site.

Belongs to the SprT family. Zn(2+) serves as cofactor.

The protein localises to the cytoplasm. The sequence is that of Protein SprT from Glaesserella parasuis serovar 5 (strain SH0165) (Haemophilus parasuis).